Here is a 238-residue protein sequence, read N- to C-terminus: Uridylate kinase (238 aa).

12–15 (KLSG) contributes to the ATP binding site. Position 54 (G54) interacts with UMP. ATP-binding residues include G55 and R59. Residues D74 and 135–142 (TGNPFFTT) each bind UMP. Residues T162, Y168, and D171 each coordinate ATP.

The protein belongs to the UMP kinase family. In terms of assembly, homohexamer.

Its subcellular location is the cytoplasm. It catalyses the reaction UMP + ATP = UDP + ADP. It functions in the pathway pyrimidine metabolism; CTP biosynthesis via de novo pathway; UDP from UMP (UMPK route): step 1/1. With respect to regulation, inhibited by UTP. Catalyzes the reversible phosphorylation of UMP to UDP. This is Uridylate kinase from Azoarcus sp. (strain BH72).